The chain runs to 591 residues: CTP synthase (591 aa).

The segment at 1 to 281 (MPQSRTHSRT…DAYVVRQLGL (281 aa)) is amidoligase domain. CTP is bound at residue serine 23. Residue serine 23 participates in UTP binding. Residues 24 to 29 (SLGKGL) and aspartate 81 each bind ATP. Positions 81 and 155 each coordinate Mg(2+). CTP contacts are provided by residues 162–164 (DIE), 202–207 (KTKPTQ), and lysine 238. Residues 202–207 (KTKPTQ) and lysine 238 each bind UTP. One can recognise a Glutamine amidotransferase type-1 domain in the interval 306–554 (RIALVGKYVD…VDAALKHKLE (249 aa)). Glycine 369 is an L-glutamine binding site. Catalysis depends on cysteine 396, which acts as the Nucleophile; for glutamine hydrolysis. Residues 397–400 (LGLQ), glutamate 419, and arginine 480 each bind L-glutamine. Catalysis depends on residues histidine 527 and glutamate 529. Positions 568–591 (AVATDDELADSADRDEVASVDSAG) are disordered.

Belongs to the CTP synthase family. In terms of assembly, homotetramer.

The catalysed reaction is UTP + L-glutamine + ATP + H2O = CTP + L-glutamate + ADP + phosphate + 2 H(+). The enzyme catalyses L-glutamine + H2O = L-glutamate + NH4(+). It catalyses the reaction UTP + NH4(+) + ATP = CTP + ADP + phosphate + 2 H(+). It participates in pyrimidine metabolism; CTP biosynthesis via de novo pathway; CTP from UDP: step 2/2. Its activity is regulated as follows. Allosterically activated by GTP, when glutamine is the substrate; GTP has no effect on the reaction when ammonia is the substrate. The allosteric effector GTP functions by stabilizing the protein conformation that binds the tetrahedral intermediate(s) formed during glutamine hydrolysis. Inhibited by the product CTP, via allosteric rather than competitive inhibition. Functionally, catalyzes the ATP-dependent amination of UTP to CTP with either L-glutamine or ammonia as the source of nitrogen. Regulates intracellular CTP levels through interactions with the four ribonucleotide triphosphates. This is CTP synthase from Rhodococcus jostii (strain RHA1).